We begin with the raw amino-acid sequence, 433 residues long: UDP-N-acetylglucosamine 1-carboxyvinyltransferase (433 aa).

Position 34–35 (34–35 (KN)) interacts with phosphoenolpyruvate. Arg104 lines the UDP-N-acetyl-alpha-D-glucosamine pocket. Cys128 serves as the catalytic Proton donor. Cys128 is modified (2-(S-cysteinyl)pyruvic acid O-phosphothioketal). UDP-N-acetyl-alpha-D-glucosamine-binding residues include Asp320 and Ile342.

Belongs to the EPSP synthase family. MurA subfamily.

The protein localises to the cytoplasm. It catalyses the reaction phosphoenolpyruvate + UDP-N-acetyl-alpha-D-glucosamine = UDP-N-acetyl-3-O-(1-carboxyvinyl)-alpha-D-glucosamine + phosphate. It participates in cell wall biogenesis; peptidoglycan biosynthesis. In terms of biological role, cell wall formation. Adds enolpyruvyl to UDP-N-acetylglucosamine. The chain is UDP-N-acetylglucosamine 1-carboxyvinyltransferase from Synechococcus sp. (strain CC9605).